A 131-amino-acid polypeptide reads, in one-letter code: uncharacterized protein (131 aa).

This is an uncharacterized protein from Aquifex aeolicus (strain VF5).